Here is a 434-residue protein sequence, read N- to C-terminus: Adenylosuccinate synthetase (434 aa).

Residues 14–20 (GDEGKGK) and 42–44 (GHE) contribute to the GTP site. The Proton acceptor role is filled by aspartate 15. Mg(2+) is bound by residues aspartate 15 and glycine 42. IMP is bound by residues 15–18 (DEGK), 40–43 (NSGH), threonine 133, arginine 147, asparagine 229, threonine 244, and arginine 308. The active-site Proton donor is the histidine 43. A substrate-binding site is contributed by 304 to 310 (VTTGRVR). GTP-binding positions include arginine 310, 336 to 338 (KLD), and 422 to 424 (GTG).

Belongs to the adenylosuccinate synthetase family. Homodimer. Mg(2+) is required as a cofactor.

It is found in the cytoplasm. The enzyme catalyses IMP + L-aspartate + GTP = N(6)-(1,2-dicarboxyethyl)-AMP + GDP + phosphate + 2 H(+). It functions in the pathway purine metabolism; AMP biosynthesis via de novo pathway; AMP from IMP: step 1/2. In terms of biological role, plays an important role in the salvage pathway for purine nucleotide biosynthesis. Catalyzes the first committed step in the biosynthesis of AMP from IMP. This chain is Adenylosuccinate synthetase, found in Theileria parva (East coast fever infection agent).